A 1903-amino-acid chain; its full sequence is Plexin-A4 (1903 aa).

The N-terminal stretch at 1-26 (MAFHNRRWNFTFSCCVVVLLLPLVAA) is a signal peptide. Residues 27–515 (RPQQPSAATR…SESQLTRVPV (489 aa)) enclose the Sema domain. The Extracellular segment spans residues 27-1246 (RPQQPSAATR…ITSDSPLSST (1220 aa)). Cystine bridges form between cysteine 97–cysteine 106 and cysteine 132–cysteine 140. The N-linked (GlcNAc...) asparagine glycan is linked to asparagine 166. Cystine bridges form between cysteine 291–cysteine 413, cysteine 307–cysteine 364, and cysteine 382–cysteine 401. Asparagine 450 carries an N-linked (GlcNAc...) asparagine glycan. In terms of domain architecture, PSI 1 spans 517-567 (ACEQYSSCNECLGSGDPHCGWCVLHSMCTRKEKCERSSEPRRFASNIKQCV). Intrachain disulfides connect cysteine 518–cysteine 535, cysteine 524–cysteine 566, cysteine 527–cysteine 544, and cysteine 538–cysteine 550. N-linked (GlcNAc...) asparagine glycosylation is found at asparagine 575 and asparagine 600. Residues cysteine 601 and cysteine 620 are joined by a disulfide bond. Asparagine 656, asparagine 663, asparagine 764, and asparagine 772 each carry an N-linked (GlcNAc...) asparagine glycan. The 48-residue stretch at 663–710 (NCSVHKSCLSCVGSPYQCHWCKYRHTCTHDPSSCSFQEGRVKQPEECP) folds into the PSI 2 domain. A PSI 3 domain is found at 811–864 (KCDARRESCGLCLKADPLFGCVWCKGENRCSLKQHCSYPQSMWLEHNGINSKCT). 4 IPT/TIG domains span residues 866 to 960 (PRIT…YYFV), 962 to 1046 (PQLL…FEYV), 1049 to 1148 (PTIT…FVYY), and 1151 to 1246 (PVFE…LSST). 6 N-linked (GlcNAc...) asparagine glycosylation sites follow: asparagine 981, asparagine 992, asparagine 1025, asparagine 1141, asparagine 1189, and asparagine 1214. The helical transmembrane segment at 1247–1267 (AVISIAGAGGLLIFFIVIVLI) threads the bilayer. Residues 1268-1903 (AYKRKSRESD…QVVAFMSLES (636 aa)) lie on the Cytoplasmic side of the membrane.

It belongs to the plexin family.

It is found in the cell membrane. Involved in the development of primary sensory neurons especially in branching of the peripheral axons. Interacts with the SLIT2 signaling specifically to promote axonal branching of Rohon-Beard neurons and the trigeminal sensory ganglion neurons. This Danio rerio (Zebrafish) protein is Plexin-A4 (plxna4).